Consider the following 380-residue polypeptide: Glutamate 5-kinase (380 aa).

Lys15 is an ATP binding site. Positions 59, 146, and 158 each coordinate substrate. Thr178 to Asp179 serves as a coordination point for ATP. Positions Arg285–Ala363 constitute a PUA domain.

Belongs to the glutamate 5-kinase family.

It is found in the cytoplasm. It carries out the reaction L-glutamate + ATP = L-glutamyl 5-phosphate + ADP. It participates in amino-acid biosynthesis; L-proline biosynthesis; L-glutamate 5-semialdehyde from L-glutamate: step 1/2. In terms of biological role, catalyzes the transfer of a phosphate group to glutamate to form L-glutamate 5-phosphate. The chain is Glutamate 5-kinase from Acidovorax ebreus (strain TPSY) (Diaphorobacter sp. (strain TPSY)).